Consider the following 467-residue polypeptide: Serine/threonine-protein phosphatase 2A 56 kDa regulatory subunit epsilon isoform (467 aa).

Positions 1 to 39 are disordered; sequence MSSAPTTPPSVDKVDGFSRKSVRKARQKRSQSSSQFRSQ. Position 2 is an N-acetylserine (Ser2). Thr7 is subject to Phosphothreonine. Basic residues predominate over residues 20 to 29; that stretch reads KSVRKARQKR. Ser30, Ser32, and Ser34 each carry phosphoserine. The span at 30–39 shows a compositional bias: low complexity; sequence SQSSSQFRSQ.

It belongs to the phosphatase 2A regulatory subunit B56 family. As to quaternary structure, PP2A consists of a common heterodimeric core enzyme, composed of a 36 kDa catalytic subunit (subunit C) and a 65 kDa constant regulatory subunit (PR65 or subunit A), that associates with a variety of regulatory subunits. Proteins that associate with the core dimer include three families of regulatory subunits B (the R2/B/PR55/B55, R3/B''/PR72/PR130/PR59 and R5/B'/B56 families), the 48 kDa variable regulatory subunit, viral proteins, and cell signaling molecules. Interacts with SGO1. Found in a complex with at least ARL2, PPP2CB; PPP2R1A, PPP2R2A, PPP2R5E and TBCD.

The protein resides in the cytoplasm. Functionally, the B regulatory subunit might modulate substrate selectivity and catalytic activity, and might also direct the localization of the catalytic enzyme to a particular subcellular compartment. Interacts with cyclin G in vitro. In Mus musculus (Mouse), this protein is Serine/threonine-protein phosphatase 2A 56 kDa regulatory subunit epsilon isoform (Ppp2r5e).